The chain runs to 81 residues: Small ribosomal subunit protein uS15 (81 aa).

The protein belongs to the universal ribosomal protein uS15 family. In terms of assembly, part of the 30S ribosomal subunit. Forms a bridge to the 50S subunit in the 70S ribosome, contacting the 23S rRNA.

Functionally, one of the primary rRNA binding proteins, it binds directly to 16S rRNA where it helps nucleate assembly of the platform of the 30S subunit by binding and bridging several RNA helices of the 16S rRNA. In terms of biological role, forms an intersubunit bridge (bridge B4) with the 23S rRNA of the 50S subunit in the ribosome. This is Small ribosomal subunit protein uS15 from Mesomycoplasma hyorhinis (Mycoplasma hyorhinis).